Consider the following 277-residue polypeptide: Ethanolamine ammonia-lyase small subunit (277 aa).

Positions 164, 185, and 214 each coordinate adenosylcob(III)alamin.

The protein belongs to the EutC family. In terms of assembly, the basic unit is a heterodimer which dimerizes to form tetramers. The heterotetramers trimerize; 6 large subunits form a core ring with 6 small subunits projecting outwards. It depends on adenosylcob(III)alamin as a cofactor.

Its subcellular location is the bacterial microcompartment. It catalyses the reaction ethanolamine = acetaldehyde + NH4(+). Its pathway is amine and polyamine degradation; ethanolamine degradation. Catalyzes the deamination of various vicinal amino-alcohols to oxo compounds. Allows this organism to utilize ethanolamine as the sole source of nitrogen and carbon in the presence of external vitamin B12. In Pseudomonas fluorescens (strain SBW25), this protein is Ethanolamine ammonia-lyase small subunit.